The primary structure comprises 72 residues: Kappa-conotoxin PVIIA (72 aa).

Positions 1 to 22 are cleaved as a signal peptide; that stretch reads MKLTCVVIVVVLFLTACQLITA. Residues 23-45 constitute a propeptide that is removed on maturation; sequence DDSRRTQKHRALRSTTKLSLSTR. 3 cysteine pairs are disulfide-bonded: C46–C61, C53–C65, and C60–C71. P49 carries the post-translational modification 4-hydroxyproline.

This sequence belongs to the conotoxin O1 superfamily. This toxin is not amidated at the C-terminal Val residue. In terms of tissue distribution, expressed by the venom duct.

It localises to the secreted. Functionally, kappa-conotoxins bind and inhibit voltage-gated potassium channels (Kv). This toxin inhibits the drosophila Shaker channel (IC(50)=57-80 nM). In vivo, when tested in fish, this toxin induces hyperactivity, followed by continuous contraction and extension of major fins, without immobilization or death. Injection of this peptide together with the delta-conotoxin PVIA causes the sudden tetanus of prey (STOP) syndrome, which is a single, lethal 'fin-pop' in envenomed fish. When tested in mice, induces hyperactivity. The chain is Kappa-conotoxin PVIIA from Conus purpurascens (Purple cone).